Here is a 782-residue protein sequence, read N- to C-terminus: Translation initiation factor IF-2 (782 aa).

The tract at residues 47–196 is disordered; sequence DNAIDGTNKK…TPPKPKELPE (150 aa). A compositionally biased stretch (basic and acidic residues) spans 53 to 65; it reads TNKKAEAPKKETT. The span at 66–81 shows a compositional bias: polar residues; it reads SNENGNSKGPNKPNMT. 2 stretches are compositionally biased toward low complexity: residues 82 to 93 and 118 to 170; these read NSNEKSNKPNNP and NTSK…NNKG. The tr-type G domain maps to 283-452; the sequence is ERPPVVTIMG…LLVSEVEELK (170 aa). Residues 292–299 are G1; it reads GHVDHGKT. 292–299 provides a ligand contact to GTP; sequence GHVDHGKT. A G2 region spans residues 317–321; sequence GITQH. The segment at 338 to 341 is G3; sequence DTPG. Residues 338–342 and 392–395 each bind GTP; these read DTPGH and NKID. Residues 392-395 form a G4 region; sequence NKID. Residues 428–430 form a G5 region; sequence SAK.

The protein belongs to the TRAFAC class translation factor GTPase superfamily. Classic translation factor GTPase family. IF-2 subfamily.

Its subcellular location is the cytoplasm. In terms of biological role, one of the essential components for the initiation of protein synthesis. Protects formylmethionyl-tRNA from spontaneous hydrolysis and promotes its binding to the 30S ribosomal subunits. Also involved in the hydrolysis of GTP during the formation of the 70S ribosomal complex. This Listeria monocytogenes serotype 4b (strain CLIP80459) protein is Translation initiation factor IF-2.